We begin with the raw amino-acid sequence, 56 residues long: Small ribosomal subunit protein uS14 (56 aa).

Cysteine 21, cysteine 24, cysteine 39, and cysteine 42 together coordinate Zn(2+).

The protein belongs to the universal ribosomal protein uS14 family. Zinc-binding uS14 subfamily. As to quaternary structure, part of the 30S ribosomal subunit. Zn(2+) serves as cofactor.

Functionally, binds 16S rRNA, required for the assembly of 30S particles. In Pyrococcus furiosus (strain ATCC 43587 / DSM 3638 / JCM 8422 / Vc1), this protein is Small ribosomal subunit protein uS14.